The primary structure comprises 201 residues: FMN reductase (NADH) RutF (201 aa).

A disordered region spans residues 169-201; that stretch reads APRSGAAPAEPARAARALGARPAEGPALALRSA.

Belongs to the non-flavoprotein flavin reductase family. RutF subfamily.

It carries out the reaction FMNH2 + NAD(+) = FMN + NADH + 2 H(+). Functionally, catalyzes the reduction of FMN to FMNH2 which is used to reduce pyrimidine by RutA via the Rut pathway. In Methylorubrum extorquens (strain ATCC 14718 / DSM 1338 / JCM 2805 / NCIMB 9133 / AM1) (Methylobacterium extorquens), this protein is FMN reductase (NADH) RutF.